The primary structure comprises 445 residues: Tubulin beta-3 chain (445 aa).

GTP-binding residues include glutamine 11, glutamate 69, serine 138, glycine 142, threonine 143, glycine 144, asparagine 204, and asparagine 226. Glutamate 69 serves as a coordination point for Mg(2+). The segment at 425–445 (YQDATAEEYDEEEQDGEEEHD) is disordered. The segment covering 429–445 (TAEEYDEEEQDGEEEHD) has biased composition (acidic residues).

The protein belongs to the tubulin family. In terms of assembly, dimer of alpha and beta chains. A typical microtubule is a hollow water-filled tube with an outer diameter of 25 nm and an inner diameter of 15 nM. Alpha-beta heterodimers associate head-to-tail to form protofilaments running lengthwise along the microtubule wall with the beta-tubulin subunit facing the microtubule plus end conferring a structural polarity. Microtubules usually have 13 protofilaments but different protofilament numbers can be found in some organisms and specialized cells. The cofactor is Mg(2+).

The protein localises to the cytoplasm. Its subcellular location is the cytoskeleton. Tubulin is the major constituent of microtubules, a cylinder consisting of laterally associated linear protofilaments composed of alpha- and beta-tubulin heterodimers. Microtubules grow by the addition of GTP-tubulin dimers to the microtubule end, where a stabilizing cap forms. Below the cap, tubulin dimers are in GDP-bound state, owing to GTPase activity of alpha-tubulin. In Zea mays (Maize), this protein is Tubulin beta-3 chain (TUBB3).